The primary structure comprises 230 residues: Ribosomal RNA large subunit methyltransferase E (230 aa).

The segment covering Met-1–Gly-13 has biased composition (gly residues). Residues Met-1 to Lys-22 are disordered. Residues Gly-81, Trp-83, Asp-100, Asp-116, and Asp-140 each coordinate S-adenosyl-L-methionine. The Proton acceptor role is filled by Lys-180.

The protein belongs to the class I-like SAM-binding methyltransferase superfamily. RNA methyltransferase RlmE family.

It is found in the cytoplasm. The enzyme catalyses uridine(2552) in 23S rRNA + S-adenosyl-L-methionine = 2'-O-methyluridine(2552) in 23S rRNA + S-adenosyl-L-homocysteine + H(+). Specifically methylates the uridine in position 2552 of 23S rRNA at the 2'-O position of the ribose in the fully assembled 50S ribosomal subunit. This chain is Ribosomal RNA large subunit methyltransferase E, found in Sphingopyxis alaskensis (strain DSM 13593 / LMG 18877 / RB2256) (Sphingomonas alaskensis).